We begin with the raw amino-acid sequence, 169 residues long: Cilia- and flagella-associated protein 276 (169 aa).

Disordered stretches follow at residues 26 to 45 (SKKL…EPWS) and 150 to 169 (HTAA…FFST). Residues 36–45 (HLAQQQEPWS) are compositionally biased toward polar residues. Positions 160–169 (RKKDGGFFST) are enriched in basic and acidic residues.

As to quaternary structure, microtubule inner protein component of sperm flagellar doublet microtubules. Expressed in cerebrum, cerebellum, gastrocnemius muscle, spinal cord and lung tissues.

It is found in the cytoplasm. The protein localises to the cytoskeleton. Its subcellular location is the flagellum axoneme. It localises to the cilium axoneme. Its function is as follows. Microtubule inner protein (MIP) part of the dynein-decorated doublet microtubules (DMTs) in cilia axoneme, which is required for motile cilia beating. May play an important role for the maintenance of myelin-axon integrity. May affect intracellular Ca(2+) homeostasis. The chain is Cilia- and flagella-associated protein 276 from Homo sapiens (Human).